A 59-amino-acid chain; its full sequence is Light-harvesting protein B-800-850 alpha chain E (59 aa).

Over 1-11 (MNQGRIWTVVK) the chain is Cytoplasmic. A helical membrane pass occupies residues 12–35 (PTVGLPLLLGSVTVIAILVHFAVL). Histidine 31 is a binding site for a bacteriochlorophyll. The Periplasmic segment spans residues 36-59 (SNTTWFSKYWNGKAAAIESSVSIG).

It belongs to the antenna complex alpha subunit family. In terms of assembly, the core complex is formed by different alpha and beta chains, binding bacteriochlorophyll molecules, and arranged most probably in tetrameric structures disposed around the reaction center. The non-pigmented gamma chains may constitute additional components.

It is found in the cell inner membrane. Its function is as follows. Antenna complexes are light-harvesting systems, which transfer the excitation energy to the reaction centers. The protein is Light-harvesting protein B-800-850 alpha chain E (pucAE) of Rhodopseudomonas palustris (strain ATCC BAA-98 / CGA009).